The following is a 1037-amino-acid chain: Exportin-T (1037 aa).

The protein belongs to the exportin family.

Its subcellular location is the nucleus. The protein localises to the cytoplasm. Its function is as follows. tRNA nucleus export receptor which facilitates tRNA translocation across the nuclear pore complex. Involved in pre-tRNA splicing, probably by affecting the interaction of pre-tRNA with splicing endonuclease. The chain is Exportin-T (los1) from Neosartorya fischeri (strain ATCC 1020 / DSM 3700 / CBS 544.65 / FGSC A1164 / JCM 1740 / NRRL 181 / WB 181) (Aspergillus fischerianus).